Here is a 557-residue protein sequence, read N- to C-terminus: Potassium-transporting ATPase potassium-binding subunit (557 aa).

12 consecutive transmembrane segments (helical) span residues 5–25 (GFLL…PLGS), 63–83 (LSAI…MLLG), 132–152 (GLTV…FALI), 170–190 (LLRI…LFFI), 253–273 (FVQM…FGEV), 283–303 (LLWA…WAEV), 329–349 (VLVS…AVIA), 356–376 (ALGG…FGGV), 379–399 (GLYG…LMIG), 416–436 (LTAL…ALAM), 484–504 (LLAL…MAIA), and 526–546 (LFVG…FIPA).

The protein belongs to the KdpA family. The system is composed of three essential subunits: KdpA, KdpB and KdpC.

The protein resides in the cell inner membrane. In terms of biological role, part of the high-affinity ATP-driven potassium transport (or Kdp) system, which catalyzes the hydrolysis of ATP coupled with the electrogenic transport of potassium into the cytoplasm. This subunit binds the periplasmic potassium ions and delivers the ions to the membrane domain of KdpB through an intramembrane tunnel. In Escherichia coli O6:K15:H31 (strain 536 / UPEC), this protein is Potassium-transporting ATPase potassium-binding subunit.